An 834-amino-acid polypeptide reads, in one-letter code: Leucine--tRNA ligase (834 aa).

The 'HIGH' region motif lies at 40 to 50 (PYPSGNIHMGH). Positions 586-590 (KMSKS) match the 'KMSKS' region motif. Residue K589 coordinates ATP.

The protein belongs to the class-I aminoacyl-tRNA synthetase family.

It localises to the cytoplasm. It catalyses the reaction tRNA(Leu) + L-leucine + ATP = L-leucyl-tRNA(Leu) + AMP + diphosphate. In Nitratidesulfovibrio vulgaris (strain DSM 19637 / Miyazaki F) (Desulfovibrio vulgaris), this protein is Leucine--tRNA ligase.